The chain runs to 490 residues: 53 kDa membrane antigen A (490 aa).

An N-terminal signal peptide occupies residues 1 to 16; it reads MKKKLFFALLVLILSS. Cys-17 carries N-palmitoyl cysteine lipidation. Residue Cys-17 is the site of S-diacylglycerol cysteine attachment.

The protein resides in the cell membrane. The chain is 53 kDa membrane antigen A (tdpA) from Treponema denticola.